The following is a 759-amino-acid chain: MDDQLKQSALDFHEFPVPGKIQVSPTKPLATQRDLALAYSPGVAAPCLEIEKDPLKAYKYTARGNLVAVISNGTAVLGLGNIGALAGKPVMEGKGVLFKKFAGIDVFDIEVDELDPDKFIEVVAALEPTFGGINLEDIKAPECFYIEQKLRERMNIPVFHDDQHGTAIISTAAILNGLRVVEKNISDVRMVVSGAGAAAIACMNLLVALGLQKHNIVVCDSKGVIYQGREPNMAETKAAYAVVDDGKRTLDDVIEGADIFLGCSGPKVLTQEMVKKMARAPMILALANPEPEILPPLAKEVRPDAIICTGRSDYPNQVNNVLCFPFIFRGALDVGATAINEEMKLAAVRAIAELAHAEQSEVVASAYGDQDLSFGPEYIIPKPFDPRLIVKIAPAVAKAAMESGVATRPIADFDVYIDKLTEFVYKTNLFMKPIFSQARKAPKRVVLPEGEEARVLHATQELVTLGLAKPILIGRPNVIEMRIQKLGLQIKAGVDFEIVNNESDPRFKEYWTEYFQIMKRRGVTQEQAQRALISNPTVIGAIMVQRGEADAMICGTVGDYHEHFSVVKNVFGYRDGVHTAGAMNALLLPSGNTFIADTYVNDEPDAEELAEITLMAAETVRRFGIEPRVALLSHSNFGSSDCPSSSKMRQALELVRERAPELMIDGEMHGDAALVEAIRNDRMPDSSLKGSANILVMPNMEAARISYNLLRVSSSEGVTVGPVLMGVAKPVHVLTPIASVRRIVNMVALAVVEAQTQPL.

The malic enzyme stretch occupies residues 1-428; sequence MDDQLKQSAL…KLTEFVYKTN (428 aa). The active-site Proton donor is Tyr39. Lys56 carries the post-translational modification N6-acetyllysine. Catalysis depends on Lys94, which acts as the Proton acceptor. A divalent metal cation is bound by residues Glu136, Asp137, and Asp162. Residues 195–198, Asn288, and Asn320 contribute to the NADP(+) site; that span reads AGAA. Residues 429–759 are phosphate acetyltransferase; required for oligomerization, inhibition by acetyl-CoA and activation by glutamate, aspartate, and glucose-6-phosphate; it reads LFMKPIFSQA…AVVEAQTQPL (331 aa).

The protein in the N-terminal section; belongs to the malic enzymes family. It in the C-terminal section; belongs to the phosphate acetyltransferase and butyryltransferase family. As to quaternary structure, homooligomer, possibly an octamer. Requires Mg(2+) as cofactor. Mn(2+) is required as a cofactor.

The enzyme catalyses (S)-malate + NADP(+) = pyruvate + CO2 + NADPH. The catalysed reaction is oxaloacetate + H(+) = pyruvate + CO2. With respect to regulation, inhibited by 4 mM Mg(2+) and acetyl-CoA, competitively inhibited by fumarate and oxaloacetate. Activated by glutamate and aspartate, glucose-6-phosphate, acetyl-phosphate and 2 mM KCl. Catalyzes the decarboxylation of malate to pyruvate. In vitro, shows malolactic enzyme activity in the presence of NADPH. However, it is unlikely that this activity is of relevance in E.coli, which produces little NADPH. The polypeptide is NADP-dependent malic enzyme (maeB) (Escherichia coli (strain K12)).